Here is a 376-residue protein sequence, read N- to C-terminus: UPF0284 protein glr4139 (376 aa).

The protein belongs to the UPF0284 family.

The protein is UPF0284 protein glr4139 of Gloeobacter violaceus (strain ATCC 29082 / PCC 7421).